A 668-amino-acid chain; its full sequence is Probable 6-phosphofructo-2-kinase PB17E12.14c (668 aa).

The segment covering methionine 1–serine 14 has biased composition (basic and acidic residues). Disordered stretches follow at residues methionine 1–proline 105 and histidine 136–asparagine 185. 3 stretches are compositionally biased toward polar residues: residues asparagine 46–valine 56, serine 65–proline 86, and serine 164–threonine 184. Glycine 197–serine 204 is an ATP binding site. Active-site residues include aspartate 281 and cysteine 312. Arginine 346 contacts beta-D-fructose 6-phosphate. The active site involves glutamate 540. Residue histidine 608 is the Proton donor of the active site.

The catalysed reaction is beta-D-fructose 6-phosphate + ATP = beta-D-fructose 2,6-bisphosphate + ADP + H(+). Synthesis of fructose 2,6-bisphosphate. The polypeptide is Probable 6-phosphofructo-2-kinase PB17E12.14c (Schizosaccharomyces pombe (strain 972 / ATCC 24843) (Fission yeast)).